The primary structure comprises 143 residues: Hemoglobin subunit alpha-1 (143 aa).

The residue at position 2 (Ser-2) is an N-acetylserine. Residues 2–143 (SLTAKDKDTV…LSRALAEKYR (142 aa)) enclose the Globin domain. His-60 contributes to the O2 binding site. His-89 contributes to the heme b binding site.

This sequence belongs to the globin family. Hb1 is a heterotetramer of two alpha-1 chains and two beta-1 chains. In terms of tissue distribution, red blood cells.

Its function is as follows. Involved in oxygen transport from gills to the various peripheral tissues. This is Hemoglobin subunit alpha-1 (hba1) from Anarhichas minor (Arctic spotted wolffish).